Here is a 200-residue protein sequence, read N- to C-terminus: Ras-related protein RABF2b (200 aa).

Residue 17-25 (GDVGAGKSS) participates in GTP binding. The short motif at 39-47 (QESTIGAAF) is the Effector region element. Residues 65–69 (DTAGQ), 123–126 (NKSD), and 153–154 (SA) contribute to the GTP site. 2 S-geranylgeranyl cysteine lipidation sites follow: cysteine 198 and cysteine 199.

It belongs to the small GTPase superfamily. Rab family. In terms of assembly, interacts with VPS9A homodimer. Interacts with TCTP1. Interacts with MON1. Interacts with EREX (via PX domain). Binds to VPS3. Expressed in roots and actively dividing cells.

The protein resides in the early endosome membrane. Its subcellular location is the endosome membrane. It localises to the prevacuolar compartment membrane. It is found in the endosome. The protein localises to the multivesicular body membrane. The protein resides in the cell membrane. Its subcellular location is the cytoplasm. With respect to regulation, regulated by guanine nucleotide exchange factors (GEFs) which promote the exchange of bound GDP for free GTP. In terms of biological role, endosomal protein that may be involved in endocytosis. Involved in the trafficking of proteins from prevacuolar compartments (PVCs) to vacuoles. May activate the MON1-CCZ1 complex which acts as guanine nucleotide exchange factors (GEF) for Rab7 protein family, and serves as a link between Rab5 and Rab7 families in PVCs, and mediates PVC maturation. Involved in vacuolar transport of storage proteins with EREX as effector. Regulates membrane trafficking to protein storage vacuoles (PSVs). The polypeptide is Ras-related protein RABF2b (Arabidopsis thaliana (Mouse-ear cress)).